The chain runs to 495 residues: L-arabinose isomerase (495 aa).

4 residues coordinate Mn(2+): E305, E332, H349, and H448.

This sequence belongs to the arabinose isomerase family. Mn(2+) is required as a cofactor.

The enzyme catalyses beta-L-arabinopyranose = L-ribulose. Its pathway is carbohydrate degradation; L-arabinose degradation via L-ribulose; D-xylulose 5-phosphate from L-arabinose (bacterial route): step 1/3. In terms of biological role, catalyzes the conversion of L-arabinose to L-ribulose. The sequence is that of L-arabinose isomerase from Actinobacillus succinogenes (strain ATCC 55618 / DSM 22257 / CCUG 43843 / 130Z).